The primary structure comprises 534 residues: Arginine transporter 1 (534 aa).

6 consecutive transmembrane segments (helical) span residues 35–55, 99–119, 126–146, 154–174, 182–202, and 216–236; these read YVLL…YFGW, SLFT…GYLL, AVAL…AFSG, PAFV…LLIV, ALIM…PLVL, and VCIG…FFFI. Asn-246 carries an N-linked (GlcNAc...) asparagine glycan. The tract at residues 261-302 is disordered; sequence TAQSSPKAVDSPPCDEGASSRGRLAVSHNTERTAPDDEQEKD. A compositionally biased stretch (basic and acidic residues) spans 289–302; that stretch reads NTERTAPDDEQEKD. The next 6 membrane-spanning stretches (helical) occupy residues 329–349, 365–385, 388–408, 419–439, 451–471, and 483–503; these read AFTF…WVMA, YTLE…GVVI, IGIM…YVCV, FSVI…YVFV, LIGV…VLYG, and RPVV…LLAM.

It belongs to the SLC43A transporter (TC 2.A.1.44) family.

The protein localises to the cell membrane. The catalysed reaction is L-arginine(in) = L-arginine(out). In terms of biological role, selective L-arginine transporter that is essential for parasite survival and virulence. Does not require other inorganic ions such as sodium, chloride, potassium or calcium. The sequence is that of Arginine transporter 1 from Toxoplasma gondii (strain ATCC 50611 / Me49).